Here is a 1098-residue protein sequence, read N- to C-terminus: Eukaryotic translation initiation factor 3 subunit A (1098 aa).

The PCI domain occupies 324–503 (AQEQATRVLL…DCVRFGSSDA (180 aa)). A coiled-coil region spans residues 574–844 (TEIERIHRRK…ARQAVIDSQR (271 aa)). Disordered regions lie at residues 599-648 (EKAA…KIKR) and 805-1098 (RAEK…NWRR). Composition is skewed to basic and acidic residues over residues 608-648 (QAKR…KIKR), 805-857 (RAEK…REME), and 877-895 (MPQR…EPFR). The segment covering 905–914 (DSSWRSSAQP) has biased composition (polar residues). Basic and acidic residues-rich tracts occupy residues 916 to 978 (RKPD…ERGA) and 1054 to 1079 (LPPR…RDGP). The span at 1080–1098 (NRNSGANNAGNADSANWRR) shows a compositional bias: low complexity.

This sequence belongs to the eIF-3 subunit A family. In terms of assembly, component of the eukaryotic translation initiation factor 3 (eIF-3) complex.

The protein localises to the cytoplasm. Functionally, RNA-binding component of the eukaryotic translation initiation factor 3 (eIF-3) complex, which is involved in protein synthesis of a specialized repertoire of mRNAs and, together with other initiation factors, stimulates binding of mRNA and methionyl-tRNAi to the 40S ribosome. The eIF-3 complex specifically targets and initiates translation of a subset of mRNAs involved in cell proliferation. The chain is Eukaryotic translation initiation factor 3 subunit A from Caenorhabditis briggsae.